The following is a 245-amino-acid chain: 2,3-bisphosphoglycerate-dependent phosphoglycerate mutase (245 aa).

Substrate-binding positions include 9-16 (RHGESEWN), 22-23 (TG), R61, 88-91 (ERHY), K99, 115-116 (RR), and 181-182 (GN). Residue H10 is the Tele-phosphohistidine intermediate of the active site. E88 acts as the Proton donor/acceptor in catalysis.

This sequence belongs to the phosphoglycerate mutase family. BPG-dependent PGAM subfamily.

It carries out the reaction (2R)-2-phosphoglycerate = (2R)-3-phosphoglycerate. It participates in carbohydrate degradation; glycolysis; pyruvate from D-glyceraldehyde 3-phosphate: step 3/5. Functionally, catalyzes the interconversion of 2-phosphoglycerate and 3-phosphoglycerate. The sequence is that of 2,3-bisphosphoglycerate-dependent phosphoglycerate mutase from Nocardia farcinica (strain IFM 10152).